We begin with the raw amino-acid sequence, 249 residues long: Large ribosomal subunit protein uL4 (249 aa).

The protein belongs to the universal ribosomal protein uL4 family. Part of the 50S ribosomal subunit.

In terms of biological role, one of the primary rRNA binding proteins, this protein initially binds near the 5'-end of the 23S rRNA. It is important during the early stages of 50S assembly. It makes multiple contacts with different domains of the 23S rRNA in the assembled 50S subunit and ribosome. Functionally, forms part of the polypeptide exit tunnel. This Methanospirillum hungatei JF-1 (strain ATCC 27890 / DSM 864 / NBRC 100397 / JF-1) protein is Large ribosomal subunit protein uL4.